The sequence spans 184 residues: Phosphonoformate cytidylyltransferase (184 aa).

The enzyme catalyses phosphonoformate + CTP = CMP-5'-phosphonoformate + diphosphate. It functions in the pathway secondary metabolite biosynthesis; bialaphos biosynthesis. Its function is as follows. Catalyzes the displacement of the beta- and gamma-phosphates of CTP by phosphonoformate to produce CMP-5'-phosphonoformate, an intermediate in the biosynthesis of phosphinothricin tripeptide (PTT), also known as bialaphos (BA), a natural-product antibiotic and potent herbicide. The sequence is that of Phosphonoformate cytidylyltransferase from Streptomyces viridochromogenes (strain DSM 40736 / JCM 4977 / BCRC 1201 / Tue 494).